The following is a 328-amino-acid chain: Reticulocalbin-3 (328 aa).

Positions 1 to 20 (MMWRWSFLLLLLLLRHWALG) are cleaved as a signal peptide. Residues 24–48 (PDAGPHGQDRVHHGTPLSEAPHDDA) form a disordered region. 6 EF-hand domains span residues 77–112 (QARL…TQQR), 113–148 (HIRD…HYEP), 163–198 (KMLA…EEFP), 200–235 (MRDI…EEPG), 241–276 (WVQT…PSQD), and 277–312 (QPLV…FVGS). Ca(2+) is bound by residues D92, D94, W96, E101, D126, D128, D130, R132, and E137. N140 carries an N-linked (GlcNAc...) asparagine glycan. 20 residues coordinate Ca(2+): D176, D178, D180, M182, E187, D213, N215, D217, Y219, E224, D254, N256, D258, R260, E265, D290, D292, D294, R296, and E301. The Prevents secretion from ER motif lies at 325 to 328 (HDEL).

This sequence belongs to the CREC family. In terms of assembly, interacts with PCSK6 (immature form including the propeptide); probably involved in the maturation and the secretion of PCSK6. In terms of processing, degraded by PCSK6 and other endoproteases including FURIN and PCSK5. Post-translationally, N-glycosylated. Highly expressed in lung and heart. Also detected in liver, spleen, kidney, skeletal muscle, intestine, stomach, and brain.

It localises to the endoplasmic reticulum lumen. Probable molecular chaperone assisting protein biosynthesis and transport in the endoplasmic reticulum. Required for the proper biosynthesis and transport of pulmonary surfactant-associated protein A/SP-A, pulmonary surfactant-associated protein D/SP-D and the lipid transporter ABCA3. By regulating both the proper expression and the degradation through the endoplasmic reticulum-associated protein degradation pathway of these proteins plays a crucial role in pulmonary surfactant homeostasis. Has an anti-fibrotic activity by negatively regulating the secretion of type I and type III collagens. This calcium-binding protein also transiently associates with immature PCSK6 and regulates its secretion. The protein is Reticulocalbin-3 of Mus musculus (Mouse).